A 315-amino-acid chain; its full sequence is Aspartate carbamoyltransferase catalytic subunit (315 aa).

The carbamoyl phosphate site is built by R65 and T66. Position 93 (K93) interacts with L-aspartate. 3 residues coordinate carbamoyl phosphate: R115, H145, and Q148. R179 and R234 together coordinate L-aspartate. Residues G275 and P276 each coordinate carbamoyl phosphate.

Belongs to the aspartate/ornithine carbamoyltransferase superfamily. ATCase family. In terms of assembly, heterododecamer (2C3:3R2) of six catalytic PyrB chains organized as two trimers (C3), and six regulatory PyrI chains organized as three dimers (R2).

It catalyses the reaction carbamoyl phosphate + L-aspartate = N-carbamoyl-L-aspartate + phosphate + H(+). It participates in pyrimidine metabolism; UMP biosynthesis via de novo pathway; (S)-dihydroorotate from bicarbonate: step 2/3. Catalyzes the condensation of carbamoyl phosphate and aspartate to form carbamoyl aspartate and inorganic phosphate, the committed step in the de novo pyrimidine nucleotide biosynthesis pathway. The polypeptide is Aspartate carbamoyltransferase catalytic subunit (Xanthomonas axonopodis pv. citri (strain 306)).